The following is a 305-amino-acid chain: Oxygen-dependent coproporphyrinogen-III oxidase (305 aa).

Residue Ser98 coordinates substrate. A divalent metal cation is bound by residues His102 and His112. His112 functions as the Proton donor in the catalytic mechanism. 114 to 116 is a substrate binding site; it reads NVR. His151 and His181 together coordinate a divalent metal cation. Positions 246-281 are important for dimerization; that stretch reads YVEFNLVYDRGTLFGLQSGGRTESILMSMPPLARWE. 264–266 contacts substrate; the sequence is GGR.

The protein belongs to the aerobic coproporphyrinogen-III oxidase family. As to quaternary structure, homodimer. A divalent metal cation is required as a cofactor.

It localises to the cytoplasm. The catalysed reaction is coproporphyrinogen III + O2 + 2 H(+) = protoporphyrinogen IX + 2 CO2 + 2 H2O. It participates in porphyrin-containing compound metabolism; protoporphyrin-IX biosynthesis; protoporphyrinogen-IX from coproporphyrinogen-III (O2 route): step 1/1. Functionally, involved in the heme biosynthesis. Catalyzes the aerobic oxidative decarboxylation of propionate groups of rings A and B of coproporphyrinogen-III to yield the vinyl groups in protoporphyrinogen-IX. The chain is Oxygen-dependent coproporphyrinogen-III oxidase from Vibrio atlanticus (strain LGP32) (Vibrio splendidus (strain Mel32)).